Reading from the N-terminus, the 349-residue chain is Methylthioribose-1-phosphate isomerase (349 aa).

Residues arginine 49–alanine 51, arginine 93, and glutamine 201 contribute to the substrate site. Aspartate 242 (proton donor) is an active-site residue. Asparagine 252–lysine 253 provides a ligand contact to substrate.

It belongs to the EIF-2B alpha/beta/delta subunits family. MtnA subfamily.

The catalysed reaction is 5-(methylsulfanyl)-alpha-D-ribose 1-phosphate = 5-(methylsulfanyl)-D-ribulose 1-phosphate. It participates in amino-acid biosynthesis; L-methionine biosynthesis via salvage pathway; L-methionine from S-methyl-5-thio-alpha-D-ribose 1-phosphate: step 1/6. In terms of biological role, catalyzes the interconversion of methylthioribose-1-phosphate (MTR-1-P) into methylthioribulose-1-phosphate (MTRu-1-P). The polypeptide is Methylthioribose-1-phosphate isomerase (Petrotoga mobilis (strain DSM 10674 / SJ95)).